Reading from the N-terminus, the 506-residue chain is Zinc finger and SCAN domain containing protein 4C (506 aa).

A disordered region spans residues 1–24 (MASQQAPAKDLQTNNLEFTPTDSS). Residues 37–119 (SAQLNFSPSN…RFMESLTDEC (83 aa)) form the SCAN box domain. 4 C2H2-type zinc fingers span residues 395–417 (YKCEECSRMFKHARSLSSHQRTH), 424–446 (LLCVTCQKMFKRVSDRRTHEIIH), 452–474 (FKCSTCEKSFSHKTNLKSHEMIH), and 480–503 (YVCSLCSRRFRQSSTYHRHLRNYH).

Embryonic stem (ES) cell-specific. Expressed in only 5% of ES cells at a given time, but nearly all ES cells express it at least once during 9 passages.

It is found in the nucleus. Its subcellular location is the chromosome. It localises to the telomere. Functionally, embryonic stem (ES) cell-specific transcription factor required to regulate ES cell pluripotency. Binds telomeres and plays a key role in genomic stability in ES cells by regulating telomere elongation. Acts as an activator of spontaneous telomere sister chromatid exchange (T-SCE) and telomere elongation in undifferentiated ES cells. The sequence is that of Zinc finger and SCAN domain containing protein 4C (Zscan4c) from Mus musculus (Mouse).